The following is a 465-amino-acid chain: Argininosuccinate lyase (465 aa).

This sequence belongs to the lyase 1 family. Argininosuccinate lyase subfamily.

The protein localises to the cytoplasm. It catalyses the reaction 2-(N(omega)-L-arginino)succinate = fumarate + L-arginine. Its pathway is amino-acid biosynthesis; L-arginine biosynthesis; L-arginine from L-ornithine and carbamoyl phosphate: step 3/3. This chain is Argininosuccinate lyase, found in Hyphomonas neptunium (strain ATCC 15444).